An 88-amino-acid chain; its full sequence is Small ribosomal subunit protein bS16 (88 aa).

The protein belongs to the bacterial ribosomal protein bS16 family.

The sequence is that of Small ribosomal subunit protein bS16 from Geotalea uraniireducens (strain Rf4) (Geobacter uraniireducens).